The following is a 134-amino-acid chain: Acyl carrier protein, mitochondrial (134 aa).

The transit peptide at 1–46 directs the protein to the mitochondrion; that stretch reads MFRTAALTAARVARPAVASAVRAGVARPAFVQAVPKVAAFQAVRFY. A Carrier domain is found at 55–131; it reads DEVFSRIAQV…KAVEYILSQP (77 aa). At S91 the chain carries O-(pantetheine 4'-phosphoryl)serine.

It belongs to the acyl carrier protein (ACP) family. Complex I is composed of about 30 different subunits. Post-translationally, 4'-phosphopantetheine is transferred from CoA to a specific serine of apo-ACP by acpS. This modification is essential for activity because fatty acids are bound in thioester linkage to the sulfhydryl of the prosthetic group.

It is found in the mitochondrion. It functions in the pathway lipid metabolism; fatty acid biosynthesis. In terms of biological role, carrier of the growing fatty acid chain in fatty acid biosynthesis. May be involved in the synthesis of very-long-chain fatty acids. Accessory and non-catalytic subunit of the mitochondrial membrane respiratory chain NADH dehydrogenase (Complex I), which functions in the transfer of electrons from NADH to the respiratory chain. The chain is Acyl carrier protein, mitochondrial (nuo-12) from Neurospora crassa (strain ATCC 24698 / 74-OR23-1A / CBS 708.71 / DSM 1257 / FGSC 987).